The primary structure comprises 447 residues: Cysteine--tRNA ligase (447 aa).

Cys28 provides a ligand contact to Zn(2+). The 'HIGH' region motif lies at 30-40; it reads PTVYNYIHIGN. Zn(2+)-binding residues include Cys211, His236, and Glu240. The short motif at 268-272 is the 'KMSKS' region element; it reads KMSKS. Lys271 lines the ATP pocket.

The protein belongs to the class-I aminoacyl-tRNA synthetase family. As to quaternary structure, monomer. Requires Zn(2+) as cofactor.

The protein resides in the cytoplasm. It catalyses the reaction tRNA(Cys) + L-cysteine + ATP = L-cysteinyl-tRNA(Cys) + AMP + diphosphate. This chain is Cysteine--tRNA ligase, found in Streptococcus pyogenes serotype M18 (strain MGAS8232).